The sequence spans 201 residues: Ribonuclease HII (201 aa).

The RNase H type-2 domain maps to 15–201 (QRVAGVDEVG…FRPVRRFLEA (187 aa)). A divalent metal cation is bound by residues Asp-21, Glu-22, and Asp-113.

It belongs to the RNase HII family. It depends on Mn(2+) as a cofactor. Requires Mg(2+) as cofactor.

The protein resides in the cytoplasm. It catalyses the reaction Endonucleolytic cleavage to 5'-phosphomonoester.. In terms of biological role, endonuclease that specifically degrades the RNA of RNA-DNA hybrids. This is Ribonuclease HII from Nitrosococcus oceani (strain ATCC 19707 / BCRC 17464 / JCM 30415 / NCIMB 11848 / C-107).